Reading from the N-terminus, the 184-residue chain is Ribosome maturation factor RimM (184 aa).

Residues 101–180 (EGEFFYCDLV…KITTHNAKTL (80 aa)) enclose the PRC barrel domain.

Belongs to the RimM family. Binds ribosomal protein uS19.

It is found in the cytoplasm. An accessory protein needed during the final step in the assembly of 30S ribosomal subunit, possibly for assembly of the head region. Essential for efficient processing of 16S rRNA. May be needed both before and after RbfA during the maturation of 16S rRNA. It has affinity for free ribosomal 30S subunits but not for 70S ribosomes. The chain is Ribosome maturation factor RimM from Helicobacter pylori (strain ATCC 700392 / 26695) (Campylobacter pylori).